A 188-amino-acid polypeptide reads, in one-letter code: Elongation factor P (188 aa).

K34 is subject to N6-(3,6-diaminohexanoyl)-5-hydroxylysine.

It belongs to the elongation factor P family. Post-translationally, may be beta-lysylated on the epsilon-amino group of Lys-34 by the combined action of EpmA and EpmB, and then hydroxylated on the C5 position of the same residue by EpmC (if this protein is present). Lysylation is critical for the stimulatory effect of EF-P on peptide-bond formation. The lysylation moiety may extend toward the peptidyltransferase center and stabilize the terminal 3-CCA end of the tRNA. Hydroxylation of the C5 position on Lys-34 may allow additional potential stabilizing hydrogen-bond interactions with the P-tRNA.

It localises to the cytoplasm. It participates in protein biosynthesis; polypeptide chain elongation. Its function is as follows. Involved in peptide bond synthesis. Alleviates ribosome stalling that occurs when 3 or more consecutive Pro residues or the sequence PPG is present in a protein, possibly by augmenting the peptidyl transferase activity of the ribosome. Modification of Lys-34 is required for alleviation. The chain is Elongation factor P from Vibrio atlanticus (strain LGP32) (Vibrio splendidus (strain Mel32)).